A 139-amino-acid chain; its full sequence is Large ribosomal subunit protein uL24 (139 aa).

The disordered stretch occupies residues 1-25 (MKRNTNVSSSRRKSRKAHFTASSGE).

The protein belongs to the universal ribosomal protein uL24 family.

In Dictyostelium discoideum (Social amoeba), this protein is Large ribosomal subunit protein uL24 (rpl26).